We begin with the raw amino-acid sequence, 301 residues long: Phosphoribosylaminoimidazole-succinocarboxamide synthase (301 aa).

Belongs to the SAICAR synthetase family.

The enzyme catalyses 5-amino-1-(5-phospho-D-ribosyl)imidazole-4-carboxylate + L-aspartate + ATP = (2S)-2-[5-amino-1-(5-phospho-beta-D-ribosyl)imidazole-4-carboxamido]succinate + ADP + phosphate + 2 H(+). It participates in purine metabolism; IMP biosynthesis via de novo pathway; 5-amino-1-(5-phospho-D-ribosyl)imidazole-4-carboxamide from 5-amino-1-(5-phospho-D-ribosyl)imidazole-4-carboxylate: step 1/2. The protein is Phosphoribosylaminoimidazole-succinocarboxamide synthase of Mycolicibacterium vanbaalenii (strain DSM 7251 / JCM 13017 / BCRC 16820 / KCTC 9966 / NRRL B-24157 / PYR-1) (Mycobacterium vanbaalenii).